Reading from the N-terminus, the 362-residue chain is Biotin synthase (362 aa).

The region spanning 70-305 (CCGNVVDLCS…QQIIRYAGGR (236 aa)) is the Radical SAM core domain. Residues C88, C92, and C95 each coordinate [4Fe-4S] cluster. Positions 133, 170, 230, and 300 each coordinate [2Fe-2S] cluster.

It belongs to the radical SAM superfamily. Biotin synthase family. Homodimer. [4Fe-4S] cluster serves as cofactor. Requires [2Fe-2S] cluster as cofactor.

It catalyses the reaction (4R,5S)-dethiobiotin + (sulfur carrier)-SH + 2 reduced [2Fe-2S]-[ferredoxin] + 2 S-adenosyl-L-methionine = (sulfur carrier)-H + biotin + 2 5'-deoxyadenosine + 2 L-methionine + 2 oxidized [2Fe-2S]-[ferredoxin]. It participates in cofactor biosynthesis; biotin biosynthesis; biotin from 7,8-diaminononanoate: step 2/2. In terms of biological role, catalyzes the conversion of dethiobiotin (DTB) to biotin by the insertion of a sulfur atom into dethiobiotin via a radical-based mechanism. This Synechocystis sp. (strain ATCC 27184 / PCC 6803 / Kazusa) protein is Biotin synthase.